Here is a 270-residue protein sequence, read N- to C-terminus: Fibroblast growth factor 5 (270 aa).

Residues methionine 1–alanine 20 form the signal peptide. Positions arginine 25–serine 86 are disordered. The segment covering proline 41–arginine 69 has biased composition (low complexity). The segment covering leucine 76–serine 86 has biased composition (polar residues). A glycan (N-linked (GlcNAc...) asparagine) is linked at asparagine 112. The interval glutamate 237–serine 257 is disordered.

It belongs to the heparin-binding growth factors family. As to quaternary structure, interacts with FGFR1 and FGFR2. Affinity between fibroblast growth factors (FGFs) and their receptors is increased by heparan sulfate glycosaminoglycans that function as coreceptors.

It is found in the secreted. Its function is as follows. Plays an important role in the regulation of cell proliferation and cell differentiation. Required for normal regulation of the hair growth cycle. Functions as an inhibitor of hair elongation by promoting progression from anagen, the growth phase of the hair follicle, into catagen the apoptosis-induced regression phase. This chain is Fibroblast growth factor 5 (FGF5), found in Bos taurus (Bovine).